We begin with the raw amino-acid sequence, 150 residues long: Small ribosomal subunit protein uS9 (150 aa).

Belongs to the universal ribosomal protein uS9 family.

This Mycolicibacterium smegmatis (strain ATCC 700084 / mc(2)155) (Mycobacterium smegmatis) protein is Small ribosomal subunit protein uS9.